Consider the following 52-residue polypeptide: Light-harvesting protein B-870 alpha chain (52 aa).

Topologically, residues 1–15 (MAKFYKIWLIFDPRR) are cytoplasmic. The helical transmembrane segment at 16 to 36 (VFVAQGVFLFLLAAMIHLVVL) threads the bilayer. Position 32 (histidine 32) interacts with a bacteriochlorophyll. The Periplasmic portion of the chain corresponds to 37 to 52 (SSGLNWFEAAAAVGGQ).

Belongs to the antenna complex alpha subunit family. In terms of assembly, the core complex is formed by different alpha and beta chains, binding bacteriochlorophyll molecules, and arranged most probably in tetrameric structures disposed around the reaction center. The non-pigmented gamma chains may constitute additional components.

Its subcellular location is the cell inner membrane. Its function is as follows. Antenna complexes are light-harvesting systems, which transfer the excitation energy to the reaction centers. The sequence is that of Light-harvesting protein B-870 alpha chain (pufA) from Roseobacter denitrificans (strain ATCC 33942 / OCh 114) (Erythrobacter sp. (strain OCh 114)).